Consider the following 207-residue polypeptide: Urease accessory protein UreG (207 aa).

14–21 (GPVGSGKT) lines the GTP pocket.

This sequence belongs to the SIMIBI class G3E GTPase family. UreG subfamily. As to quaternary structure, homodimer. UreD, UreF and UreG form a complex that acts as a GTP-hydrolysis-dependent molecular chaperone, activating the urease apoprotein by helping to assemble the nickel containing metallocenter of UreC. The UreE protein probably delivers the nickel.

It localises to the cytoplasm. Functionally, facilitates the functional incorporation of the urease nickel metallocenter. This process requires GTP hydrolysis, probably effectuated by UreG. This is Urease accessory protein UreG from Chelativorans sp. (strain BNC1).